A 162-amino-acid polypeptide reads, in one-letter code: Superoxide dismutase [Cu-Zn] (162 aa).

A signal peptide spans 1–20; it reads MNKSGIILIGTILFSSMAIA. Cu cation is bound by residues histidine 66, histidine 68, and histidine 83. A disulfide bridge connects residues cysteine 73 and cysteine 158. Zn(2+)-binding residues include histidine 83, histidine 92, histidine 100, and aspartate 103. Histidine 137 is a binding site for Cu cation.

This sequence belongs to the Cu-Zn superoxide dismutase family. In terms of assembly, homodimer. Cu cation is required as a cofactor. Zn(2+) serves as cofactor.

The protein resides in the periplasm. It carries out the reaction 2 superoxide + 2 H(+) = H2O2 + O2. In terms of biological role, destroys radicals which are normally produced within the cells and which are toxic to biological systems. The protein is Superoxide dismutase [Cu-Zn] (sodC) of Legionella pneumophila.